Reading from the N-terminus, the 325-residue chain is MFEHYSVLKEESIKGLAIKPDGIYVDCTTGGGGHSLEIASRLNENGQLFAFDQDKDALAAARDRLSTYADRIVFVQSNFRGLEEQLKKHGIEQVDGILFDLGVSSPQLDRGDRGFSYNHDALLDMRMDQSQHLSAYEVVNEWSYERLVSIFFSYGEEKFSKQIARKIEAYREQQDIKTTHQLVEIIKDAIPAPARRKGGHPAKRIFQALRIAVNDELEVFNNALHQAARLIAVNGRIAVITFHSLEDRICKQAFKKWSTDKPTPRHLPIVPESHQAPFKLVTRKPITADTSELDENRRSRSAKLRVIEKVSEWDHEFTYEEGWRK.

S-adenosyl-L-methionine-binding positions include 32–34 (GGH), Asp-52, Phe-79, Asp-100, and Gln-107.

Belongs to the methyltransferase superfamily. RsmH family.

The protein localises to the cytoplasm. It carries out the reaction cytidine(1402) in 16S rRNA + S-adenosyl-L-methionine = N(4)-methylcytidine(1402) in 16S rRNA + S-adenosyl-L-homocysteine + H(+). In terms of biological role, specifically methylates the N4 position of cytidine in position 1402 (C1402) of 16S rRNA. The chain is Ribosomal RNA small subunit methyltransferase H from Oceanobacillus iheyensis (strain DSM 14371 / CIP 107618 / JCM 11309 / KCTC 3954 / HTE831).